Here is a 98-residue protein sequence, read N- to C-terminus: Small ribosomal subunit protein bS20 (98 aa).

Basic residues predominate over residues 1–15 (MAPKKTTKKGGPKKR). The tract at residues 1–21 (MAPKKTTKKGGPKKRPSAEKR) is disordered.

The protein belongs to the bacterial ribosomal protein bS20 family.

Binds directly to 16S ribosomal RNA. The protein is Small ribosomal subunit protein bS20 of Chlamydia felis (strain Fe/C-56) (Chlamydophila felis).